The primary structure comprises 963 residues: Iron-responsive element-binding protein 2 (963 aa).

3 residues coordinate [4Fe-4S] cluster: cysteine 512, cysteine 578, and cysteine 581.

Belongs to the aconitase/IPM isomerase family. In terms of assembly, interacts with RBCK1 only in iron-rich conditions. Interacts (when associated with the 4Fe-4S) with FBXL5. Interacts with CIAO1 and CIAO2A. [4Fe-4S] cluster serves as cofactor. Post-translationally, ubiquitinated and degraded by the proteasome in presence of high level of iron and oxygen. Ubiquitinated by a SCF complex containing FBXL5. Upon iron and oxygen depletion FBXL5 is degraded, preventing ubiquitination and allowing its RNA-binding activity.

The protein resides in the cytoplasm. Functionally, RNA-binding protein that binds to iron-responsive elements (IRES), which are stem-loop structures found in the 5'-UTR of ferritin, and delta aminolevulinic acid synthase mRNAs, and in the 3'-UTR of transferrin receptor mRNA. Binding to the IRE element in ferritin results in the repression of its mRNA translation. Binding of the protein to the transferrin receptor mRNA inhibits the degradation of this otherwise rapidly degraded mRNA. This is Iron-responsive element-binding protein 2 (Ireb2) from Mus musculus (Mouse).